Reading from the N-terminus, the 454-residue chain is Tryptophanase (454 aa).

Lys-256 carries the N6-(pyridoxal phosphate)lysine modification.

The protein belongs to the beta-eliminating lyase family. As to quaternary structure, homotetramer. Pyridoxal 5'-phosphate serves as cofactor.

It catalyses the reaction L-tryptophan + H2O = indole + pyruvate + NH4(+). Its pathway is amino-acid degradation; L-tryptophan degradation via pyruvate pathway; indole and pyruvate from L-tryptophan: step 1/1. The polypeptide is Tryptophanase (Hyphomonas neptunium (strain ATCC 15444)).